A 364-amino-acid chain; its full sequence is Alanine racemase (364 aa).

Residue lysine 34 is the Proton acceptor; specific for D-alanine of the active site. The residue at position 34 (lysine 34) is an N6-(pyridoxal phosphate)lysine. Position 129 (arginine 129) interacts with substrate. Tyrosine 259 acts as the Proton acceptor; specific for L-alanine in catalysis. Residue methionine 307 coordinates substrate.

The protein belongs to the alanine racemase family. The cofactor is pyridoxal 5'-phosphate.

The enzyme catalyses L-alanine = D-alanine. Its pathway is amino-acid biosynthesis; D-alanine biosynthesis; D-alanine from L-alanine: step 1/1. In terms of biological role, catalyzes the interconversion of L-alanine and D-alanine. May also act on other amino acids. The sequence is that of Alanine racemase (alr) from Coxiella burnetii (strain CbuG_Q212) (Coxiella burnetii (strain Q212)).